The primary structure comprises 157 residues: Large ribosomal subunit protein uL22 (157 aa).

This sequence belongs to the universal ribosomal protein uL22 family. In terms of assembly, part of the 50S ribosomal subunit.

Its function is as follows. This protein binds specifically to 23S rRNA. It makes multiple contacts with different domains of the 23S rRNA in the assembled 50S subunit and ribosome. Functionally, the globular domain of the protein is located near the polypeptide exit tunnel on the outside of the subunit, while an extended beta-hairpin is found that lines the wall of the exit tunnel in the center of the 70S ribosome. This chain is Large ribosomal subunit protein uL22, found in Staphylothermus marinus (strain ATCC 43588 / DSM 3639 / JCM 9404 / F1).